We begin with the raw amino-acid sequence, 405 residues long: Bifunctional enzyme IspD/IspF (405 aa).

A 2-C-methyl-D-erythritol 4-phosphate cytidylyltransferase region spans residues 1-246 (MLQMPSKQPI…KLSASLLPDV (246 aa)). Residues 247-405 (RTGNGYDVHQ…TATVVYRGRT (159 aa)) are 2-C-methyl-D-erythritol 2,4-cyclodiphosphate synthase. The a divalent metal cation site is built by aspartate 253 and histidine 255. Residues 253–255 (DVH) and 279–280 (HS) each bind 4-CDP-2-C-methyl-D-erythritol 2-phosphate. Histidine 287 lines the a divalent metal cation pocket. Residues 301–303 (DIG), 377–380 (TTNE), phenylalanine 384, and arginine 387 each bind 4-CDP-2-C-methyl-D-erythritol 2-phosphate.

The protein in the N-terminal section; belongs to the IspD/TarI cytidylyltransferase family. IspD subfamily. It in the C-terminal section; belongs to the IspF family. A divalent metal cation serves as cofactor.

It catalyses the reaction 2-C-methyl-D-erythritol 4-phosphate + CTP + H(+) = 4-CDP-2-C-methyl-D-erythritol + diphosphate. The catalysed reaction is 4-CDP-2-C-methyl-D-erythritol 2-phosphate = 2-C-methyl-D-erythritol 2,4-cyclic diphosphate + CMP. Its pathway is isoprenoid biosynthesis; isopentenyl diphosphate biosynthesis via DXP pathway; isopentenyl diphosphate from 1-deoxy-D-xylulose 5-phosphate: step 2/6. It functions in the pathway isoprenoid biosynthesis; isopentenyl diphosphate biosynthesis via DXP pathway; isopentenyl diphosphate from 1-deoxy-D-xylulose 5-phosphate: step 4/6. In terms of biological role, bifunctional enzyme that catalyzes the formation of 4-diphosphocytidyl-2-C-methyl-D-erythritol from CTP and 2-C-methyl-D-erythritol 4-phosphate (MEP) (IspD), and catalyzes the conversion of 4-diphosphocytidyl-2-C-methyl-D-erythritol 2-phosphate (CDP-ME2P) to 2-C-methyl-D-erythritol 2,4-cyclodiphosphate (ME-CPP) with a corresponding release of cytidine 5-monophosphate (CMP) (IspF). This chain is Bifunctional enzyme IspD/IspF, found in Rhizobium etli (strain CIAT 652).